A 1929-amino-acid chain; its full sequence is Genome polyprotein (1929 aa).

Residues 597 to 753 (DSVISHCAKR…MSFKYENPGQ (157 aa)) enclose the SF3 helicase domain. An ATP-binding site is contributed by 623–630 (GPAGCGKT). Residue Y1137 is modified to O-(5'-phospho-RNA)-tyrosine. The region spanning 1235 to 1391 (GKIVNHVNAI…KIVIPVTKFK (157 aa)) is the Peptidase C24 domain. Catalysis depends on for 3CLpro activity residues H1271, E1292, and C1355. The RdRp catalytic domain occupies 1643–1768 (THRYCVDYSK…IVPNFVHSVM (126 aa)).

Homodimer. Interacts with NTPase, protein p30 and protease-polymerase p76. As to quaternary structure, interacts with capsid protein VP1 and protease-polymerase p76. Interacts with host IEF4e; this interaction plays a role in translation of viral proteins. In terms of assembly, homooligomer. Interacts with Vpg, protein p32 and may interact with capsid protein VP1. Post-translationally, specific enzymatic cleavages in vivo yield mature proteins. Pro-Pol is first autocatalytically cleaved, then processes the whole polyprotein. VPg is uridylylated by the polymerase and is covalently attached to the 5'-end of the polyadenylated genomic and subgenomic RNAs. This uridylylated form acts as a nucleotide-peptide primer for the polymerase.

Its subcellular location is the host endoplasmic reticulum membrane. It catalyses the reaction a ribonucleoside 5'-triphosphate + H2O = a ribonucleoside 5'-diphosphate + phosphate + H(+). The catalysed reaction is RNA(n) + a ribonucleoside 5'-triphosphate = RNA(n+1) + diphosphate. The enzyme catalyses Endopeptidase with a preference for cleavage when the P1 position is occupied by Glu-|-Xaa and the P1' position is occupied by Gly-|-Yaa.. Its function is as follows. Together with NTPase and NS4, initiates the formation of the replication complex. Induces the proliferation of the host smooth ER membranes forming long tubular structures. These remodeled membranes probably form the viral factories that contain the replication complex. Displays NTPase activity, but no helicase activity. Induces the formation of convoluted membranes derived from the host ER. These remodeled membranes probably form the viral factories that contain the replication complex. Together with NS2 and NS4, initiates the formation of the replication complex. Functionally, probable key protein responsible for the formation of membrane alterations by the virus. Induces the formation of convoluted membranes derived from the host ER. These remodeled membranes probably form the viral factories that contain the replication complex. Together with NS2 and NTPase, initiates the formation of the replication complex. In terms of biological role, viral genome-linked protein is covalently linked to the 5'-end of the positive-strand, negative-strand genomic RNAs and subgenomic RNA. Acts as a genome-linked replication primer. May recruit ribosome to viral RNA thereby promoting viral proteins translation. Interacts with host translation initiation complex to allow the translation of viral proteins. Its function is as follows. Protease-polymerase p76 processes the polyprotein: Pro-Pol is first released by autocleavage, then all other proteins are cleaved. Cleaves host translation initiation factor eIF4G1, eIF4G2 and PABP1 thereby inducing a shutdown of host protein synthesis. This shutdown may not prevent viral mRNA from being translated since viral Vpg replaces the cap. Also functions as an RNA-directed RNA polymerase, which replicates genomic and antigenomic viral RNA by recognizing specific signals. Also transcribes a subgenomic mRNA by initiating RNA synthesis internally on antigenomic RNA. This sgRNA codes for structural proteins. Catalyzes the covalent attachment VPg with viral RNAs. The protein is Genome polyprotein of Canine calicivirus (strain 48) (CaCV).